Consider the following 127-residue polypeptide: Glycine cleavage system H protein (127 aa).

Residues Thr23–Thr104 form the Lipoyl-binding domain. Lys64 is modified (N6-lipoyllysine).

It belongs to the GcvH family. The glycine cleavage system is composed of four proteins: P, T, L and H. (R)-lipoate serves as cofactor.

The glycine cleavage system catalyzes the degradation of glycine. The H protein shuttles the methylamine group of glycine from the P protein to the T protein. The sequence is that of Glycine cleavage system H protein from Lachnoclostridium phytofermentans (strain ATCC 700394 / DSM 18823 / ISDg) (Clostridium phytofermentans).